The primary structure comprises 550 residues: Hydroxylamine reductase (550 aa).

4 residues coordinate [2Fe-2S] cluster: cysteine 3, cysteine 6, cysteine 18, and cysteine 25. Hybrid [4Fe-2O-2S] cluster contacts are provided by histidine 249, glutamate 273, cysteine 317, cysteine 405, cysteine 433, cysteine 458, glutamate 492, and lysine 494. Residue cysteine 405 is modified to Cysteine persulfide.

It belongs to the HCP family. [2Fe-2S] cluster serves as cofactor. Hybrid [4Fe-2O-2S] cluster is required as a cofactor.

It localises to the cytoplasm. The catalysed reaction is A + NH4(+) + H2O = hydroxylamine + AH2 + H(+). Catalyzes the reduction of hydroxylamine to form NH(3) and H(2)O. This is Hydroxylamine reductase from Escherichia coli O17:K52:H18 (strain UMN026 / ExPEC).